The sequence spans 556 residues: Formate--tetrahydrofolate ligase (556 aa).

Residue 65–72 (TPAGEGKT) coordinates ATP.

The protein belongs to the formate--tetrahydrofolate ligase family.

The catalysed reaction is (6S)-5,6,7,8-tetrahydrofolate + formate + ATP = (6R)-10-formyltetrahydrofolate + ADP + phosphate. It functions in the pathway one-carbon metabolism; tetrahydrofolate interconversion. This chain is Formate--tetrahydrofolate ligase, found in Maricaulis maris (strain MCS10) (Caulobacter maris).